Reading from the N-terminus, the 235-residue chain is Large ribosomal subunit protein uL1 (235 aa).

Belongs to the universal ribosomal protein uL1 family. In terms of assembly, part of the 50S ribosomal subunit.

Its function is as follows. Binds directly to 23S rRNA. The L1 stalk is quite mobile in the ribosome, and is involved in E site tRNA release. In terms of biological role, protein L1 is also a translational repressor protein, it controls the translation of the L11 operon by binding to its mRNA. The sequence is that of Large ribosomal subunit protein uL1 from Mycobacterium bovis (strain ATCC BAA-935 / AF2122/97).